The following is a 474-amino-acid chain: Cytochrome c biogenesis protein CcsB (474 aa).

The next 3 helical transmembrane spans lie at 36–56 (LKLA…GTVI), 96–116 (SWWF…CTFR), and 182–202 (VGPI…MIGA).

The protein belongs to the Ccs1/CcsB family. May interact with CcsA.

It is found in the cell inner membrane. Its function is as follows. Required during biogenesis of c-type cytochromes (cytochrome c6 and cytochrome f) at the step of heme attachment. The polypeptide is Cytochrome c biogenesis protein CcsB (Gloeobacter violaceus (strain ATCC 29082 / PCC 7421)).